Here is a 536-residue protein sequence, read N- to C-terminus: Probable tyrosyl-DNA phosphodiesterase (536 aa).

The Nucleophile role is filled by H122. K124 contributes to the substrate binding site. The interaction with DNA stretch occupies residues 315–318 (SMGS). H401 serves as the catalytic Proton donor/acceptor. Residue K403 coordinates substrate.

It belongs to the tyrosyl-DNA phosphodiesterase family.

The protein resides in the nucleus. Its function is as follows. DNA repair enzyme that can remove a variety of covalent adducts from DNA through hydrolysis of a 3'-phosphodiester bond, giving rise to DNA with a free 3' phosphate. Catalyzes the hydrolysis of dead-end complexes between DNA and the topoisomerase I active site tyrosine residue. Hydrolyzes 3'-phosphoglycolates on protruding 3' ends on DNA double-strand breaks due to DNA damage by radiation and free radicals. Acts on blunt-ended double-strand DNA breaks and on single-stranded DNA. May have low 3'exonuclease activity and may be able to remove a single nucleoside from the 3'end of DNA and RNA molecules with 3'hydroxyl groups. Has no exonuclease activity towards DNA or RNA with a 3'phosphate. The protein is Probable tyrosyl-DNA phosphodiesterase of Schizosaccharomyces pombe (strain 972 / ATCC 24843) (Fission yeast).